The following is a 242-amino-acid chain: Uridylate kinase (242 aa).

11-14 is a binding site for ATP; sequence KLSG. The involved in allosteric activation by GTP stretch occupies residues 19 to 24; it reads GDKGVG. Gly53 lines the UMP pocket. The ATP site is built by Gly54 and Arg58. UMP is bound by residues Asp73 and 134-141; that span reads IGSPYFST. Residues Asn162, Tyr168, and Asp171 each contribute to the ATP site.

Belongs to the UMP kinase family. As to quaternary structure, homohexamer.

It is found in the cytoplasm. The enzyme catalyses UMP + ATP = UDP + ADP. Its pathway is pyrimidine metabolism; CTP biosynthesis via de novo pathway; UDP from UMP (UMPK route): step 1/1. Allosterically activated by GTP. Inhibited by UTP. Its function is as follows. Catalyzes the reversible phosphorylation of UMP to UDP. The sequence is that of Uridylate kinase from Streptococcus agalactiae serotype Ia (strain ATCC 27591 / A909 / CDC SS700).